Reading from the N-terminus, the 203-residue chain is E3 ubiquitin-protein ligase RNF152 (203 aa).

The RING-type zinc finger occupies 12–55 (CQICFNYYSPRRRPKLLDCKHTCCSVCLQQMRTSQKDVRCPWCR). A necessary for interaction with RRAGA region spans residues 106–165 (ISKERTLLPGDMGCRLLPGSQQKSLTVVTIPAEQQPLQGGAPQEAVEEEPDRRGVAKSST). Residues 140-159 (QPLQGGAPQEAVEEEPDRRG) are disordered. A helical membrane pass occupies residues 167–187 (SGVCTVILVACVLVFLLGIVL).

The protein belongs to the RNF152 family. In terms of assembly, interacts with RRAGA (inactive GDP-bound form); stimulated by amino acid starvation. Interacts with SEC16A. In terms of processing, ubiquitinated. Autoubiquitinated in vitro, leading to its degradation by the proteasome.

It localises to the lysosome membrane. It catalyses the reaction S-ubiquitinyl-[E2 ubiquitin-conjugating enzyme]-L-cysteine + [acceptor protein]-L-lysine = [E2 ubiquitin-conjugating enzyme]-L-cysteine + N(6)-ubiquitinyl-[acceptor protein]-L-lysine.. Its pathway is protein modification; protein ubiquitination. E3 ubiquitin-protein ligase that acts as a negative regulator of mTORC1 signaling by mediating ubiquitination of RagA/RRAGA and RHEB. Catalyzes 'Lys-63'-linked polyubiquitination of RagA/RRAGA in response to amino acid starvation, thereby regulating mTORC1 signaling. Also mediates monoubiquitination of RHEB, promoting its association with the TSC-TBC complex and subsequent inhibition. Also mediates 'Lys-48'-linked polyubiquitination of target proteins and their subsequent targeting to the proteasome for degradation. Induces apoptosis when overexpressed. This is E3 ubiquitin-protein ligase RNF152 from Rattus norvegicus (Rat).